We begin with the raw amino-acid sequence, 605 residues long: Pyruvate decarboxylase 1 (605 aa).

Positions 67 and 154 each coordinate substrate. Residues 432 to 514 (DSWFNCQKLR…FLINNGGYTI (83 aa)) are thiamine pyrophosphate binding. The Mg(2+) site is built by D482, N509, and G511. A substrate-binding site is contributed by E515.

Belongs to the TPP enzyme family. In terms of assembly, homotetramer. Requires a metal cation as cofactor. It depends on thiamine diphosphate as a cofactor.

The catalysed reaction is a 2-oxocarboxylate + H(+) = an aldehyde + CO2. The polypeptide is Pyruvate decarboxylase 1 (PDC1) (Oryza sativa subsp. indica (Rice)).